We begin with the raw amino-acid sequence, 548 residues long: 2-succinyl-5-enolpyruvyl-6-hydroxy-3-cyclohexene-1-carboxylate synthase (548 aa).

This sequence belongs to the TPP enzyme family. MenD subfamily. As to quaternary structure, homodimer. Mg(2+) is required as a cofactor. Requires Mn(2+) as cofactor. It depends on thiamine diphosphate as a cofactor.

The enzyme catalyses isochorismate + 2-oxoglutarate + H(+) = 5-enolpyruvoyl-6-hydroxy-2-succinyl-cyclohex-3-ene-1-carboxylate + CO2. It participates in quinol/quinone metabolism; 1,4-dihydroxy-2-naphthoate biosynthesis; 1,4-dihydroxy-2-naphthoate from chorismate: step 2/7. Its pathway is quinol/quinone metabolism; menaquinone biosynthesis. Catalyzes the thiamine diphosphate-dependent decarboxylation of 2-oxoglutarate and the subsequent addition of the resulting succinic semialdehyde-thiamine pyrophosphate anion to isochorismate to yield 2-succinyl-5-enolpyruvyl-6-hydroxy-3-cyclohexene-1-carboxylate (SEPHCHC). This Mycobacterium ulcerans (strain Agy99) protein is 2-succinyl-5-enolpyruvyl-6-hydroxy-3-cyclohexene-1-carboxylate synthase.